The sequence spans 931 residues: Bifunctional glutamine synthetase adenylyltransferase/adenylyl-removing enzyme (931 aa).

Residues 1-434 (MTLAPADLPA…STEFAALLAP (434 aa)) form an adenylyl removase region. The tract at residues 441–931 (PDALANYWRS…ACIAAELPFA (491 aa)) is adenylyl transferase.

The protein belongs to the GlnE family. Mg(2+) serves as cofactor.

The enzyme catalyses [glutamine synthetase]-O(4)-(5'-adenylyl)-L-tyrosine + phosphate = [glutamine synthetase]-L-tyrosine + ADP. The catalysed reaction is [glutamine synthetase]-L-tyrosine + ATP = [glutamine synthetase]-O(4)-(5'-adenylyl)-L-tyrosine + diphosphate. Involved in the regulation of glutamine synthetase GlnA, a key enzyme in the process to assimilate ammonia. When cellular nitrogen levels are high, the C-terminal adenylyl transferase (AT) inactivates GlnA by covalent transfer of an adenylyl group from ATP to specific tyrosine residue of GlnA, thus reducing its activity. Conversely, when nitrogen levels are low, the N-terminal adenylyl removase (AR) activates GlnA by removing the adenylyl group by phosphorolysis, increasing its activity. The regulatory region of GlnE binds the signal transduction protein PII (GlnB) which indicates the nitrogen status of the cell. The sequence is that of Bifunctional glutamine synthetase adenylyltransferase/adenylyl-removing enzyme from Stenotrophomonas maltophilia (strain R551-3).